We begin with the raw amino-acid sequence, 117 residues long: MTFEMLYSKIHRATITDANLNYIGSITIDEDLAKLAKLREGMKVEIVDVNNGERFSTYVILGKKRGKICVNGAAARKVAIGDVVIILAYASMNEDEINTHKPSIVLVDEKNEILEKG.

Residue Ser-25 is the Schiff-base intermediate with substrate; via pyruvic acid of the active site. Ser-25 is subject to Pyruvic acid (Ser). Residue Thr-57 participates in substrate binding. Residue Tyr-58 is the Proton donor of the active site. 72 to 74 is a substrate binding site; that stretch reads GAA.

Belongs to the PanD family. Heterooctamer of four alpha and four beta subunits. Pyruvate is required as a cofactor. Is synthesized initially as an inactive proenzyme, which is activated by self-cleavage at a specific serine bond to produce a beta-subunit with a hydroxyl group at its C-terminus and an alpha-subunit with a pyruvoyl group at its N-terminus.

Its subcellular location is the cytoplasm. The catalysed reaction is L-aspartate + H(+) = beta-alanine + CO2. It functions in the pathway cofactor biosynthesis; (R)-pantothenate biosynthesis; beta-alanine from L-aspartate: step 1/1. Catalyzes the pyruvoyl-dependent decarboxylation of aspartate to produce beta-alanine. The polypeptide is Aspartate 1-decarboxylase (Helicobacter pylori (strain J99 / ATCC 700824) (Campylobacter pylori J99)).